The sequence spans 577 residues: Thiol:disulfide interchange protein DsbD (577 aa).

A signal peptide spans 1–23; the sequence is MAQRIFTLIFLLWTAVGTPQVAA. 2 disulfide bridges follow: Cys131-Cys137 and Cys194-Cys316. A run of 7 helical transmembrane segments spans residues 182-202, 225-245, 255-275, 308-328, 338-358, 369-389, and 396-416; these read ALLI…YPLI, YVQG…AAGL, YILI…FGLY, LAGL…LLYI, GGTL…VTLF, WMQY…VFLL, and AWGI…ALML. The Thioredoxin domain occupies 437 to 577; that stretch reads VISAKPLQDW…FQAHLQKFSP (141 aa). Cys492 and Cys495 are oxidised to a cystine.

This sequence belongs to the thioredoxin family. DsbD subfamily.

The protein resides in the cell inner membrane. It catalyses the reaction [protein]-dithiol + NAD(+) = [protein]-disulfide + NADH + H(+). It carries out the reaction [protein]-dithiol + NADP(+) = [protein]-disulfide + NADPH + H(+). Functionally, required to facilitate the formation of correct disulfide bonds in some periplasmic proteins and for the assembly of the periplasmic c-type cytochromes. Acts by transferring electrons from cytoplasmic thioredoxin to the periplasm. This transfer involves a cascade of disulfide bond formation and reduction steps. This chain is Thiol:disulfide interchange protein DsbD, found in Pectobacterium atrosepticum (strain SCRI 1043 / ATCC BAA-672) (Erwinia carotovora subsp. atroseptica).